A 780-amino-acid chain; its full sequence is Tripartite terminase subunit 1 (780 aa).

Disordered regions lie at residues 41–66 (RGNA…AGPG), 428–447 (GAGA…GDRV), and 452–483 (GARG…WGDI). Residues 52–63 (ASGAGAAASSEA) are compositionally biased toward low complexity. Gly residues predominate over residues 429–439 (AGAGGPKGGAG). 691 to 698 (FASVYRCG) serves as a coordination point for ATP.

The protein belongs to the herpesviridae TRM1 protein family. In terms of assembly, associates with TRM2 and TRM3 to form the tripartite terminase complex. Interacts with portal protein.

The protein localises to the host nucleus. Its function is as follows. Component of the molecular motor that translocates viral genomic DNA in empty capsid during DNA packaging. Forms a tripartite terminase complex together with TRM2 and TRM3 in the host cytoplasm. Once the complex reaches the host nucleus, it interacts with the capsid portal vertex. This portal forms a ring in which genomic DNA is translocated into the capsid. TRM1 carries an endonuclease activity that plays an important role for the cleavage of concatemeric viral DNA into unit length genomes. The protein is Tripartite terminase subunit 1 of Homo sapiens (Human).